The following is a 284-amino-acid chain: MSVPIFRTVKELRAAVADWRRDGLRVGVVPTMGALHEGHLSLVRAALANTDRVIVTLFVNPKQFNNAGDLAAYPRTEKEDAAKLAPLGAHMLYAPDGAEMYPNGFSTTVSVSGVSEGLCGAFRPGHFDGVATVVTKLLLQTGADLAFFGEKDFQQLHVVRRLTRDLDIPTQIIACPTVREADGLALSSRNVRLSADDRRNAPKLAEALFAAAGRLAEGTPVAEVLPNARDAILAAGYQEVEYLELRGEDDLAPLSGLDRPARLLVAAWIGGVRLIDNLPVAQPA.

ATP is bound at residue 32–39 (MGALHEGH). The active-site Proton donor is histidine 39. Position 63 (glutamine 63) interacts with (R)-pantoate. Residue glutamine 63 participates in beta-alanine binding. 149 to 152 (GEKD) lines the ATP pocket. Glutamine 155 is a (R)-pantoate binding site. Residues valine 178 and 186–189 (LSSR) each bind ATP.

It belongs to the pantothenate synthetase family. Homodimer.

It localises to the cytoplasm. It catalyses the reaction (R)-pantoate + beta-alanine + ATP = (R)-pantothenate + AMP + diphosphate + H(+). Its pathway is cofactor biosynthesis; (R)-pantothenate biosynthesis; (R)-pantothenate from (R)-pantoate and beta-alanine: step 1/1. In terms of biological role, catalyzes the condensation of pantoate with beta-alanine in an ATP-dependent reaction via a pantoyl-adenylate intermediate. The polypeptide is Pantothenate synthetase (Chelativorans sp. (strain BNC1)).